Reading from the N-terminus, the 218-residue chain is N-(5'-phosphoribosyl)anthranilate isomerase (218 aa).

Belongs to the TrpF family.

The enzyme catalyses N-(5-phospho-beta-D-ribosyl)anthranilate = 1-(2-carboxyphenylamino)-1-deoxy-D-ribulose 5-phosphate. It participates in amino-acid biosynthesis; L-tryptophan biosynthesis; L-tryptophan from chorismate: step 3/5. This is N-(5'-phosphoribosyl)anthranilate isomerase from Chelativorans sp. (strain BNC1).